A 757-amino-acid polypeptide reads, in one-letter code: Catalase-peroxidase (757 aa).

A disordered region spans residues 1-28 (MENQSNDISKCPFHNGSMDNQAASGTKN). Over residues 17-28 (SMDNQAASGTKN) the composition is skewed to polar residues. The segment at residues 100 to 247 (WHSAGTYRVH…LAAVQMGLIY (148 aa)) is a cross-link (tryptophyl-tyrosyl-methioninium (Trp-Tyr) (with M-273)). Residue His-101 is the Proton acceptor of the active site. Residues 247-273 (YVNPEGPDGNPDPILAAKDIRDTFGRM) constitute a cross-link (tryptophyl-tyrosyl-methioninium (Tyr-Met) (with W-100)). His-288 contacts heme b.

The protein belongs to the peroxidase family. Peroxidase/catalase subfamily. Homodimer or homotetramer. The cofactor is heme b. In terms of processing, formation of the three residue Trp-Tyr-Met cross-link is important for the catalase, but not the peroxidase activity of the enzyme.

It carries out the reaction H2O2 + AH2 = A + 2 H2O. It catalyses the reaction 2 H2O2 = O2 + 2 H2O. In terms of biological role, bifunctional enzyme with both catalase and broad-spectrum peroxidase activity. In Flavobacterium johnsoniae (strain ATCC 17061 / DSM 2064 / JCM 8514 / BCRC 14874 / CCUG 350202 / NBRC 14942 / NCIMB 11054 / UW101) (Cytophaga johnsonae), this protein is Catalase-peroxidase.